Consider the following 141-residue polypeptide: Hemoglobin subunit alpha (141 aa).

The Globin domain maps to 1–141; that stretch reads VLSSKDKANI…VSTVLTSKYR (141 aa). Serine 3 carries the post-translational modification Phosphoserine. An N6-succinyllysine mark is found at lysine 7 and lysine 11. Lysine 16 carries the N6-acetyllysine; alternate modification. Position 16 is an N6-succinyllysine; alternate (lysine 16). Tyrosine 24 bears the Phosphotyrosine mark. Lysine 40 carries the post-translational modification N6-succinyllysine. Position 49 is a phosphoserine (serine 49). Residue histidine 58 coordinates O2. Histidine 87 provides a ligand contact to heme b. Phosphoserine is present on serine 102. At threonine 108 the chain carries Phosphothreonine. Position 124 is a phosphoserine (serine 124). A phosphothreonine mark is found at threonine 134 and threonine 137. At serine 138 the chain carries Phosphoserine.

This sequence belongs to the globin family. In terms of assembly, heterotetramer of two alpha chains and two beta chains. As to expression, red blood cells.

Involved in oxygen transport from the lung to the various peripheral tissues. Functionally, hemopressin acts as an antagonist peptide of the cannabinoid receptor CNR1. Hemopressin-binding efficiently blocks cannabinoid receptor CNR1 and subsequent signaling. This is Hemoglobin subunit alpha (HBA) from Lama glama (Llama).